Here is a 60-residue protein sequence, read N- to C-terminus: Cytochrome c oxidase assembly protein COX14 homolog (60 aa).

Residues 10-32 (VGYRLFSGSMMLLTVYGGYLCVV) traverse the membrane as a helical segment.

Its subcellular location is the mitochondrion membrane. In terms of biological role, plays a role in the assembly or stability of the cytochrome c oxidase complex (COX). In Danio rerio (Zebrafish), this protein is Cytochrome c oxidase assembly protein COX14 homolog.